The primary structure comprises 144 residues: Small ribosomal subunit protein uS11 (144 aa).

The tract at residues 123 to 144 (EDVTPVPTDSTRRKGSRRGRRL) is disordered. Residues 135–144 (RKGSRRGRRL) show a composition bias toward basic residues.

Belongs to the universal ribosomal protein uS11 family.

This Trypanosoma brucei brucei protein is Small ribosomal subunit protein uS11 (RPS14).